The sequence spans 317 residues: D-alanine--D-alanine ligase (317 aa).

Residues 104–303 (KRVWLQHGLP…YAELCVAILA (200 aa)) form the ATP-grasp domain. 130 to 185 (PDRLGLPLILKPPHEGSTVGITKVAACADMEQAYAAASHFDEVVLAEQFVRGRELT) contributes to the ATP binding site. The Mg(2+) site is built by Asp257, Glu270, and Asn272.

It belongs to the D-alanine--D-alanine ligase family. Mg(2+) is required as a cofactor. Mn(2+) serves as cofactor.

It localises to the cytoplasm. It carries out the reaction 2 D-alanine + ATP = D-alanyl-D-alanine + ADP + phosphate + H(+). Its pathway is cell wall biogenesis; peptidoglycan biosynthesis. Its function is as follows. Cell wall formation. This Bordetella avium (strain 197N) protein is D-alanine--D-alanine ligase.